The primary structure comprises 185 residues: MPYETPQAAAVAWLPYSQLATTLDQPTLDWLFDEGSLTRRLTRLSHDHFSVTPLFEGWQPLRDDECAALGLAPGEEGWVREVYLRGHDQPWVFARSVAGRSVLERGGLDLETLGTRSLGELLFCDQAFIRHPLEACRYPQTWLPTKVAHEGLWGRRSRFERSGLDLLVAEVFLPALWQAAKEETR.

Substrate-binding residues include Arg-80, Leu-118, and Glu-170.

It belongs to the UbiC family.

The protein resides in the cytoplasm. It catalyses the reaction chorismate = 4-hydroxybenzoate + pyruvate. It functions in the pathway cofactor biosynthesis; ubiquinone biosynthesis. In terms of biological role, removes the pyruvyl group from chorismate, with concomitant aromatization of the ring, to provide 4-hydroxybenzoate (4HB) for the ubiquinone pathway. The sequence is that of Probable chorismate pyruvate-lyase 2 from Pseudomonas entomophila (strain L48).